Reading from the N-terminus, the 302-residue chain is Oxygen-dependent coproporphyrinogen-III oxidase (302 aa).

S94 contributes to the substrate binding site. Residues H98 and H108 each contribute to the a divalent metal cation site. H108 serves as the catalytic Proton donor. 110 to 112 (NVR) contacts substrate. A divalent metal cation-binding residues include H147 and H177. The interval 242–277 (YVEFNLVWDRGTLFGLQSGGRTESILMSMPPLVRWE) is important for dimerization. 260–262 (GGR) is a substrate binding site.

Belongs to the aerobic coproporphyrinogen-III oxidase family. In terms of assembly, homodimer. A divalent metal cation serves as cofactor.

It localises to the cytoplasm. The catalysed reaction is coproporphyrinogen III + O2 + 2 H(+) = protoporphyrinogen IX + 2 CO2 + 2 H2O. It functions in the pathway porphyrin-containing compound metabolism; protoporphyrin-IX biosynthesis; protoporphyrinogen-IX from coproporphyrinogen-III (O2 route): step 1/1. In terms of biological role, involved in the heme biosynthesis. Catalyzes the aerobic oxidative decarboxylation of propionate groups of rings A and B of coproporphyrinogen-III to yield the vinyl groups in protoporphyrinogen-IX. The chain is Oxygen-dependent coproporphyrinogen-III oxidase from Chromobacterium violaceum (strain ATCC 12472 / DSM 30191 / JCM 1249 / CCUG 213 / NBRC 12614 / NCIMB 9131 / NCTC 9757 / MK).